The sequence spans 1094 residues: Potassium-transporting ATPase alpha chain 2 (1094 aa).

Positions 1 to 21 (MAGGAHRADRATGEERKEGGG) are enriched in basic and acidic residues. Residues 1–37 (MAGGAHRADRATGEERKEGGGRWRAPHSPSPPGPRGC) form a disordered region. Over residues 28–37 (SPSPPGPRGC) the composition is skewed to pro residues. Residues 56-157 (RYCTLLLFQR…NALTPPKQTP (102 aa)) lie on the Cytoplasmic side of the membrane. The helical transmembrane segment at 158–178 (EIIKFLKQMVGGFSILLWVGA) threads the bilayer. The Lumenal portion of the chain corresponds to 179 to 201 (VLCWIAFGIQYVSNPSASLDRVY). The helical transmembrane segment at 202–222 (LGTVLAVVVILTGIFAYYQEA) threads the bilayer. At 223–358 (KSTNIMASFC…NEKTPIAIEI (136 aa)) the chain is on the cytoplasmic side. The segment at 286 to 305 (SSLTGESEPQSRSSGFTHEN) is disordered. The helical transmembrane segment at 359 to 378 (EHFVHIVAGVAVSVGILFFI) threads the bilayer. The Lumenal segment spans residues 379–390 (IAVCMKYHVLDA). Residues 391–408 (IIFLIAIIVANVPEGLLA) traverse the membrane as a helical segment. Over 409 to 842 (TVTVALSLTA…EEGRLIFDNL (434 aa)) the chain is Cytoplasmic. Catalysis depends on Asp446, which acts as the 4-aspartylphosphate intermediate. Mg(2+) is bound by residues Asp787 and Asp791. Residues 843-862 (KKTIAYTLTKNIAELCPFLI) form a helical membrane-spanning segment. Residues 863-872 (YIILGLPLPI) lie on the Lumenal side of the membrane. Residues 873–893 (GTITLLFIDLGTDIIPSIALA) form a helical membrane-spanning segment. Residues 894–913 (YEKAESDIMNRKPRHKKKDR) lie on the Cytoplasmic side of the membrane. A helical transmembrane segment spans residues 914–936 (LVNQQLAVYSYLHIGLMQALGAF). The Lumenal portion of the chain corresponds to 937 to 988 (LVYFTVYAQQGFRPTSLFHLRIAWDSDHLNDLEDNYGQEWTSYQRQYLEWTG). A helical transmembrane segment spans residues 989 to 1008 (YTAFFVGIMVQQIADLIIRK). Over 1009–1022 (TRKNSIFKQGLFRN) the chain is Cytoplasmic. Ser1013 carries the post-translational modification Phosphoserine; by PKA. A helical transmembrane segment spans residues 1023–1041 (KVIWVGIASQIIVALLLSY). Over 1042-1056 (GLGSITALNFTMLKA) the chain is Lumenal. A helical transmembrane segment spans residues 1057–1077 (QYWFVAVPHAILIWVYDEMRK). At 1078–1094 (LFIRLYPGSWWDKNMYY) the chain is on the cytoplasmic side.

The protein belongs to the cation transport ATPase (P-type) (TC 3.A.3) family. Type IIC subfamily. The X(+)/K(+) ATPase pump is composed of a catalytic alpha subunit and an auxiliary non-catalytic beta subunit. The alpha subunit pairs with the beta subunit of gastric H(+)/K(+) ATPase ATP4B or the beta subunit of Na(+)/K(+) ATPases ATP1B1 and ATP1B3; this interaction is required for the formation of a functionally active pump and its targeting at the plasma membrane. Found in the skin, kidney, distal colon and brain. In the kidney it is found in the connecting tubule, cortical collecting duct and outer medullary collecting duct while in the brain it is specific to choroid plexus and cortex.

Its subcellular location is the apical cell membrane. It catalyses the reaction K(+)(out) + ATP + H2O + H(+)(in) = K(+)(in) + ADP + phosphate + 2 H(+)(out). The catalysed reaction is K(+)(out) + Na(+)(in) + ATP + H2O = K(+)(in) + Na(+)(out) + ADP + phosphate + H(+). Its function is as follows. The catalytic subunit of a H(+)/K(+) ATPase and/or Na(+)/K(+) ATPase pump which transports K(+) ions in exchange for Na(+) and/or H(+) ions across the apical membrane of epithelial cells. Uses ATP as an energy source to pump K(+) ions into the cell while transporting Na(+) and/or H(+) ions to the extracellular compartment. Involved in the maintenance of electrolyte homeostasis through K(+) ion absorption in kidney and colon. In the airway epithelium, may play a primary role in mucus acidification regulating its viscosity and clearance. This is Potassium-transporting ATPase alpha chain 2 (ATP12A) from Oryctolagus cuniculus (Rabbit).